Here is a 606-residue protein sequence, read N- to C-terminus: Phosphogluconate dehydratase (606 aa).

[4Fe-4S] cluster contacts are provided by Cys-156 and Cys-223.

Belongs to the IlvD/Edd family. [4Fe-4S] cluster is required as a cofactor.

It carries out the reaction 6-phospho-D-gluconate = 2-dehydro-3-deoxy-6-phospho-D-gluconate + H2O. It functions in the pathway carbohydrate metabolism; Entner-Doudoroff pathway. Catalyzes the dehydration of 6-phospho-D-gluconate to 2-dehydro-3-deoxy-6-phospho-D-gluconate. The sequence is that of Phosphogluconate dehydratase from Rhizobium meliloti (strain 1021) (Ensifer meliloti).